The chain runs to 418 residues: Voltage-gated ClC-type chloride channel ClcB (418 aa).

10 consecutive transmembrane segments (helical) span residues 5–25, 54–74, 146–166, 168–188, 222–242, 260–280, 291–311, 316–336, 352–372, and 380–400; these read LLIATVVGILAAFAVAGFRHA, LLTPALGGLAAGLLLMGWQKF, LWIACGAAAGMAAAYRAPLAG, LFIAEVLFGTMMLASLGPVII, ALIISTGVLAGLCGPLLLTLM, LALGGLIVGLLSLFTPAVWGN, APPLLMIIAGIFLCKLCAVLA, GAPGGVFTPTLFIGLAIGMLY, LLLGLTGMATLLAATTHAPIM, and MTGEYQLLPGLLIACVIASVI.

Belongs to the chloride channel (TC 2.A.49) family. ClcB subfamily.

It localises to the cell inner membrane. Its function is as follows. Probably acts as an electrical shunt for an outwardly-directed proton pump that is linked to amino acid decarboxylation, as part of the extreme acid resistance (XAR) response. The polypeptide is Voltage-gated ClC-type chloride channel ClcB (Escherichia coli O9:H4 (strain HS)).